Here is a 125-residue protein sequence, read N- to C-terminus: Phosphoribosyl-AMP cyclohydrolase (125 aa).

Position 74 (Asp-74) interacts with Mg(2+). Cys-75 contributes to the Zn(2+) binding site. Residues Asp-76 and Asp-78 each contribute to the Mg(2+) site. Zn(2+)-binding residues include Cys-92 and Cys-99.

The protein belongs to the PRA-CH family. Homodimer. Requires Mg(2+) as cofactor. Zn(2+) serves as cofactor.

Its subcellular location is the cytoplasm. It carries out the reaction 1-(5-phospho-beta-D-ribosyl)-5'-AMP + H2O = 1-(5-phospho-beta-D-ribosyl)-5-[(5-phospho-beta-D-ribosylamino)methylideneamino]imidazole-4-carboxamide. The protein operates within amino-acid biosynthesis; L-histidine biosynthesis; L-histidine from 5-phospho-alpha-D-ribose 1-diphosphate: step 3/9. Catalyzes the hydrolysis of the adenine ring of phosphoribosyl-AMP. This is Phosphoribosyl-AMP cyclohydrolase from Desulforapulum autotrophicum (strain ATCC 43914 / DSM 3382 / VKM B-1955 / HRM2) (Desulfobacterium autotrophicum).